A 210-amino-acid polypeptide reads, in one-letter code: 7-methyl-GTP pyrophosphatase (210 aa).

The active-site Proton acceptor is Asp-79.

This sequence belongs to the Maf family. YceF subfamily. A divalent metal cation serves as cofactor.

The protein localises to the cytoplasm. The catalysed reaction is N(7)-methyl-GTP + H2O = N(7)-methyl-GMP + diphosphate + H(+). Nucleoside triphosphate pyrophosphatase that hydrolyzes 7-methyl-GTP (m(7)GTP). May have a dual role in cell division arrest and in preventing the incorporation of modified nucleotides into cellular nucleic acids. In Burkholderia orbicola (strain AU 1054), this protein is 7-methyl-GTP pyrophosphatase.